The sequence spans 149 residues: Protein K7 (149 aa).

Belongs to the orthopoxvirus OPG044 family. As to quaternary structure, interacts with DDX3; this interaction inhibits DDX3 and suppresses DDX3-mediated IFN-beta promoter induction. Interacts with TRAF6 and IRAK2; these interactions suppress TLR-dependent NF-KappaB activation.

It is found in the host cytoplasm. Its function is as follows. Virulence factor that affects the acute immune response to infection. Bcl-2-like protein which, through its interaction with the DEAD box RNA helicase DDX3X/DDX3, prevents TBK1/IKKepsilon-mediated IRF3 activation. Contributes to virulence by binding to the host TRAF6 and IRAK2 and preventing host NF-kappa-B activation. The protein is Protein K7 (OPG044) of Homo sapiens (Human).